A 574-amino-acid chain; its full sequence is Acyloxyacyl hydrolase (574 aa).

An N-terminal signal peptide occupies residues 1 to 22 (MKFPWKVFKTTLLLLLLSHSLA). Positions 23-33 (SVPSEDQPGDS) are excised as a propeptide. Residues 36 to 117 (HGQSCLGCVV…YALEFCKRGA (82 aa)) enclose the Saposin B-type domain. Residues 37–69 (GQSCLGCVVLVSVIEQLAEVHNSSVQVAMERLC) form an important for enzyme activity, localization to cytoplasmic vesicles, and protein stability region. 8 disulfides stabilise this stretch: Cys40–Cys113, Cys43–Cys107, Cys69–Cys82, Cys122–Cys452, Cys159–Cys168, Cys205–Cys229, Cys248–Cys328, and Cys375–Cys458. Asn58 is a glycosylation site (N-linked (GlcNAc...) asparagine). Residues 172–176 (ELSIK) are lipopolysaccharide binding. 15 residues coordinate Ca(2+): Asp183, Asp185, Asp187, His189, Asp204, Asn206, Asp207, Asp209, Val212, Asp222, Asp226, Asn228, Asn230, Ile232, and Glu244. The N-linked (GlcNAc...) asparagine glycan is linked to Asn206. The active site involves Ser262. N-linked (GlcNAc...) asparagine glycans are attached at residues Asn408 and Asn465.

In terms of assembly, heterodimer of the large and small subunits; disulfide-linked. It depends on Ca(2+) as a cofactor. Cleaved into a large and a small subunit. In terms of processing, the small subunit is N-glycosylated. In terms of tissue distribution, detected in peritoneal macrophages (at protein level). Strongly expressed in kidney cortex, where it may be produced by proximal tubule cells. In liver, expressed at high levels in Kupffer cells. Expressed by dendritic cells. Detected at low levels in alveolar macrophages.

The protein localises to the secreted. It localises to the cytoplasmic vesicle. It carries out the reaction a 3-(acyloxy)acyl derivative of bacterial toxin + H2O = a 3-hydroxyacyl derivative of bacterial toxin + a fatty acid + H(+). Removes the secondary (acyloxyacyl-linked) fatty acyl chains from the lipid A region of bacterial lipopolysaccharides (LPS). By breaking down LPS, terminates the host response to bacterial infection and prevents prolonged and damaging inflammatory responses. In peritoneal macrophages, seems to be important for recovery from a state of immune tolerance following infection by Gram-negative bacteria. This is Acyloxyacyl hydrolase from Mus musculus (Mouse).